The following is a 353-amino-acid chain: Photosystem II D2 protein (353 aa).

Residue Thr-2 is modified to N-acetylthreonine. Thr-2 bears the Phosphothreonine mark. A helical transmembrane segment spans residues Cys-41 to Thr-61. Residue His-118 coordinates chlorophyll a. The helical transmembrane segment at Gly-125–Pro-141 threads the bilayer. Gln-130 and Asn-143 together coordinate pheophytin a. A helical transmembrane segment spans residues Val-153 to Ser-166. A chlorophyll a-binding site is contributed by His-198. The helical transmembrane segment at Ala-208 to Asp-228 threads the bilayer. Residues His-215 and Phe-262 each contribute to the a plastoquinone site. A Fe cation-binding site is contributed by His-215. Position 269 (His-269) interacts with Fe cation. Residues Gly-279–Arg-295 traverse the membrane as a helical segment.

Belongs to the reaction center PufL/M/PsbA/D family. As to quaternary structure, PSII is composed of 1 copy each of membrane proteins PsbA, PsbB, PsbC, PsbD, PsbE, PsbF, PsbH, PsbI, PsbJ, PsbK, PsbL, PsbM, PsbT, PsbX, PsbY, PsbZ, Psb30/Ycf12, at least 3 peripheral proteins of the oxygen-evolving complex and a large number of cofactors. It forms dimeric complexes. It depends on The D1/D2 heterodimer binds P680, chlorophylls that are the primary electron donor of PSII, and subsequent electron acceptors. It shares a non-heme iron and each subunit binds pheophytin, quinone, additional chlorophylls, carotenoids and lipids. There is also a Cl(-1) ion associated with D1 and D2, which is required for oxygen evolution. The PSII complex binds additional chlorophylls, carotenoids and specific lipids. as a cofactor.

Its subcellular location is the plastid. The protein resides in the chloroplast thylakoid membrane. It carries out the reaction 2 a plastoquinone + 4 hnu + 2 H2O = 2 a plastoquinol + O2. In terms of biological role, photosystem II (PSII) is a light-driven water:plastoquinone oxidoreductase that uses light energy to abstract electrons from H(2)O, generating O(2) and a proton gradient subsequently used for ATP formation. It consists of a core antenna complex that captures photons, and an electron transfer chain that converts photonic excitation into a charge separation. The D1/D2 (PsbA/PsbD) reaction center heterodimer binds P680, the primary electron donor of PSII as well as several subsequent electron acceptors. D2 is needed for assembly of a stable PSII complex. This is Photosystem II D2 protein from Oenothera argillicola (Appalachian evening primrose).